Consider the following 451-residue polypeptide: V-type proton ATPase subunit S1 (451 aa).

An N-terminal signal peptide occupies residues 1-16 (MRVLFAVFSLIMACQA). Residues 17–407 (YDAVLFSNSR…DCTGTFSSGS (391 aa)) are Lumenal-facing. N-linked (GlcNAc...) asparagine glycans are attached at residues asparagine 191, asparagine 235, asparagine 249, and asparagine 330. Residues 408–428 (WMGIVSALVLIAGLMFGYVML) form a helical membrane-spanning segment. Residues 429–451 (QSVQTMDRFDDPKQRQIVINVRE) lie on the Cytoplasmic side of the membrane.

It belongs to the vacuolar ATPase subunit S1 family. As to quaternary structure, accessory component of the multisubunit proton-transporting vacuolar (V)-ATPase protein pump. In terms of tissue distribution, expressed in pharynx, hypodermis, intestine, vulval hypodermis and the H-shape excretory cell.

It localises to the membrane. Functionally, accessory subunit of the proton-transporting vacuolar (V)-ATPase protein pump, which is required for luminal acidification of secretory vesicles. In the germline, required for the trafficking of the receptor RME-2 to the oocyte cell membrane where it regulates the uptake of yolk proteins. Also, plays an essential role in osmoregulation in the embryo, probably by regulating the proper formation of the eggshell. The protein is V-type proton ATPase subunit S1 of Caenorhabditis elegans.